The chain runs to 401 residues: tRNA N6-adenosine threonylcarbamoyltransferase (401 aa).

Residues His-111 and His-115 each contribute to the Fe cation site. Substrate is bound by residues Leu-191–Gly-195, Asp-223, Gly-236, and Asn-336. Position 364 (Asp-364) interacts with Fe cation.

Belongs to the KAE1 / TsaD family. Requires Fe(2+) as cofactor.

It localises to the cytoplasm. The enzyme catalyses L-threonylcarbamoyladenylate + adenosine(37) in tRNA = N(6)-L-threonylcarbamoyladenosine(37) in tRNA + AMP + H(+). Its function is as follows. Required for the formation of a threonylcarbamoyl group on adenosine at position 37 (t(6)A37) in tRNAs that read codons beginning with adenine. Is involved in the transfer of the threonylcarbamoyl moiety of threonylcarbamoyl-AMP (TC-AMP) to the N6 group of A37, together with TsaE and TsaB. TsaD likely plays a direct catalytic role in this reaction. This is tRNA N6-adenosine threonylcarbamoyltransferase from Tropheryma whipplei (strain TW08/27) (Whipple's bacillus).